A 165-amino-acid chain; its full sequence is Ribosome maturation factor RimM (165 aa).

The region spanning 94–165 is the PRC barrel domain; the sequence is EDEFYIADLN…YVILNYQTKV (72 aa).

The protein belongs to the RimM family. Binds ribosomal protein uS19.

Its subcellular location is the cytoplasm. In terms of biological role, an accessory protein needed during the final step in the assembly of 30S ribosomal subunit, possibly for assembly of the head region. Essential for efficient processing of 16S rRNA. May be needed both before and after RbfA during the maturation of 16S rRNA. It has affinity for free ribosomal 30S subunits but not for 70S ribosomes. This Rickettsia typhi (strain ATCC VR-144 / Wilmington) protein is Ribosome maturation factor RimM.